The following is a 176-amino-acid chain: Ferredoxin-type protein NapF (176 aa).

4Fe-4S ferredoxin-type domains follow at residues 39–68 (VENS…KGDA) and 71–100 (PEVR…PRDQ). [4Fe-4S] cluster is bound by residues Cys48, Cys51, Cys54, Cys58, Cys80, Cys83, Cys86, Cys90, Cys113, Cys121, Cys124, Cys128, Cys152, Cys155, Cys158, and Cys162. 2 consecutive 4Fe-4S ferredoxin-type domains span residues 119–138 (IECR…FKLQ) and 143–172 (AQPL…MNDL).

It belongs to the NapF family. In terms of assembly, interacts with the cytoplasmic NapA precursor. [4Fe-4S] cluster serves as cofactor.

It localises to the cytoplasm. Could be involved in the maturation of NapA, the catalytic subunit of the periplasmic nitrate reductase, before its export into the periplasm. The sequence is that of Ferredoxin-type protein NapF from Haemophilus influenzae (strain ATCC 51907 / DSM 11121 / KW20 / Rd).